The following is a 230-amino-acid chain: Uracil-DNA glycosylase (230 aa).

The active-site Proton acceptor is the D70.

Belongs to the uracil-DNA glycosylase (UDG) superfamily. UNG family.

It localises to the cytoplasm. It catalyses the reaction Hydrolyzes single-stranded DNA or mismatched double-stranded DNA and polynucleotides, releasing free uracil.. In terms of biological role, excises uracil residues from the DNA which can arise as a result of misincorporation of dUMP residues by DNA polymerase or due to deamination of cytosine. This is Uracil-DNA glycosylase from Pseudomonas fluorescens (strain SBW25).